The sequence spans 248 residues: Histone H1, gonadal (248 aa).

Disordered stretches follow at residues 1–46 and 115–248; these read PGSP…PPVL and AVAK…KARK. Over residues 9–39 the composition is skewed to basic residues; it reads ASPRKSPRKSPKKSPRKASASPRRKAKRARA. The H15 domain occupies 41 to 115; sequence THPPVLEMVQ…GASGRFRVGA (75 aa). Residues 118–248 show a composition bias toward basic residues; that stretch reads KPKKAKKTSA…KRRSPKKARK (131 aa).

The protein belongs to the histone H1/H5 family. Sperm.

The protein resides in the nucleus. It localises to the chromosome. Its function is as follows. Histones H1 are necessary for the condensation of nucleosome chains into higher-order structures. This chain is Histone H1, gonadal, found in Parechinus angulosus (Angulate sea urchin).